A 470-amino-acid polypeptide reads, in one-letter code: ATP synthase subunit beta (470 aa).

Gly-155–Thr-162 is a binding site for ATP.

It belongs to the ATPase alpha/beta chains family. In terms of assembly, F-type ATPases have 2 components, CF(1) - the catalytic core - and CF(0) - the membrane proton channel. CF(1) has five subunits: alpha(3), beta(3), gamma(1), delta(1), epsilon(1). CF(0) has three main subunits: a(1), b(2) and c(9-12). The alpha and beta chains form an alternating ring which encloses part of the gamma chain. CF(1) is attached to CF(0) by a central stalk formed by the gamma and epsilon chains, while a peripheral stalk is formed by the delta and b chains.

The protein localises to the cell membrane. The catalysed reaction is ATP + H2O + 4 H(+)(in) = ADP + phosphate + 5 H(+)(out). Produces ATP from ADP in the presence of a proton gradient across the membrane. The catalytic sites are hosted primarily by the beta subunits. This Staphylococcus haemolyticus (strain JCSC1435) protein is ATP synthase subunit beta.